The primary structure comprises 89 residues: Small ribosomal subunit protein uS14A (89 aa).

This sequence belongs to the universal ribosomal protein uS14 family. As to quaternary structure, part of the 30S ribosomal subunit. Contacts proteins S3 and S10.

Binds 16S rRNA, required for the assembly of 30S particles and may also be responsible for determining the conformation of the 16S rRNA at the A site. The polypeptide is Small ribosomal subunit protein uS14A (Streptococcus equi subsp. zooepidemicus (strain MGCS10565)).